We begin with the raw amino-acid sequence, 242 residues long: Small ribosomal subunit protein uS2 (242 aa).

It belongs to the universal ribosomal protein uS2 family.

The polypeptide is Small ribosomal subunit protein uS2 (Neisseria meningitidis serogroup C (strain 053442)).